The chain runs to 372 residues: 4-hydroxy-3-methylbut-2-en-1-yl diphosphate synthase (flavodoxin) (372 aa).

Positions 270, 273, 305, and 312 each coordinate [4Fe-4S] cluster.

It belongs to the IspG family. Requires [4Fe-4S] cluster as cofactor.

The catalysed reaction is (2E)-4-hydroxy-3-methylbut-2-enyl diphosphate + oxidized [flavodoxin] + H2O + 2 H(+) = 2-C-methyl-D-erythritol 2,4-cyclic diphosphate + reduced [flavodoxin]. The protein operates within isoprenoid biosynthesis; isopentenyl diphosphate biosynthesis via DXP pathway; isopentenyl diphosphate from 1-deoxy-D-xylulose 5-phosphate: step 5/6. Converts 2C-methyl-D-erythritol 2,4-cyclodiphosphate (ME-2,4cPP) into 1-hydroxy-2-methyl-2-(E)-butenyl 4-diphosphate. This chain is 4-hydroxy-3-methylbut-2-en-1-yl diphosphate synthase (flavodoxin), found in Idiomarina loihiensis (strain ATCC BAA-735 / DSM 15497 / L2-TR).